The chain runs to 67 residues: ATP synthase subunit c (67 aa).

2 helical membrane passes run 6-26 (ILALGIAVLGVSLGEGILVAN) and 46-66 (IMGVAFIEGTFFVLLASTFFV).

The protein belongs to the ATPase C chain family. As to quaternary structure, F-type ATPases have 2 components, F(1) - the catalytic core - and F(0) - the membrane proton channel. F(1) has five subunits: alpha(3), beta(3), gamma(1), delta(1), epsilon(1). F(0) has three main subunits: a(1), b(2) and c(10-14). The alpha and beta chains form an alternating ring which encloses part of the gamma chain. F(1) is attached to F(0) by a central stalk formed by the gamma and epsilon chains, while a peripheral stalk is formed by the delta and b chains.

It localises to the cell membrane. In terms of biological role, f(1)F(0) ATP synthase produces ATP from ADP in the presence of a proton or sodium gradient. F-type ATPases consist of two structural domains, F(1) containing the extramembraneous catalytic core and F(0) containing the membrane proton channel, linked together by a central stalk and a peripheral stalk. During catalysis, ATP synthesis in the catalytic domain of F(1) is coupled via a rotary mechanism of the central stalk subunits to proton translocation. Its function is as follows. Key component of the F(0) channel; it plays a direct role in translocation across the membrane. A homomeric c-ring of between 10-14 subunits forms the central stalk rotor element with the F(1) delta and epsilon subunits. The sequence is that of ATP synthase subunit c from Streptococcus mutans serotype c (strain ATCC 700610 / UA159).